A 257-amino-acid polypeptide reads, in one-letter code: Pyrroline-5-carboxylate reductase (257 aa).

This sequence belongs to the pyrroline-5-carboxylate reductase family.

The protein resides in the cytoplasm. The catalysed reaction is L-proline + NADP(+) = (S)-1-pyrroline-5-carboxylate + NADPH + 2 H(+). It carries out the reaction L-proline + NAD(+) = (S)-1-pyrroline-5-carboxylate + NADH + 2 H(+). The protein operates within amino-acid biosynthesis; L-proline biosynthesis; L-proline from L-glutamate 5-semialdehyde: step 1/1. Its function is as follows. Catalyzes the reduction of 1-pyrroline-5-carboxylate (PCA) to L-proline. This chain is Pyrroline-5-carboxylate reductase, found in Helicobacter pylori (strain J99 / ATCC 700824) (Campylobacter pylori J99).